Consider the following 338-residue polypeptide: Large ribosomal subunit protein uL10 (338 aa).

The tract at residues 303 to 338 is disordered; it reads VEVSAAPAAEEEKEEEKKEEEKKEEDTGAAGLALLF. The span at 317 to 328 shows a compositional bias: basic and acidic residues; sequence EEKKEEEKKEED.

The protein belongs to the universal ribosomal protein uL10 family. Part of the 50S ribosomal subunit. Forms part of the ribosomal stalk which helps the ribosome interact with GTP-bound translation factors. Forms a heptameric L10(L12)2(L12)2(L12)2 complex, where L10 forms an elongated spine to which the L12 dimers bind in a sequential fashion.

Forms part of the ribosomal stalk, playing a central role in the interaction of the ribosome with GTP-bound translation factors. This chain is Large ribosomal subunit protein uL10, found in Methanocaldococcus jannaschii (strain ATCC 43067 / DSM 2661 / JAL-1 / JCM 10045 / NBRC 100440) (Methanococcus jannaschii).